The chain runs to 70 residues: uncharacterized protein (70 aa).

A helical transmembrane segment spans residues 4-24 (VKTIAMLAMLVIVAALIYMGY).

The protein resides in the host membrane. This is an uncharacterized protein from Dryophytes versicolor (chameleon treefrog).